The chain runs to 372 residues: Protein Wnt-1 (372 aa).

An N-terminal signal peptide occupies residues Met1–Ala29. Intrachain disulfides connect Cys77-Cys88, Cys130-Cys138, and Cys140-Cys158. The N-linked (GlcNAc...) asparagine glycan is linked to Asn87. Asn187 carries an N-linked (GlcNAc...) asparagine glycan. 8 disulfide bridges follow: Cys225-Cys239, Cys227-Cys234, Cys301-Cys332, Cys317-Cys327, Cys331-Cys371, Cys347-Cys362, Cys349-Cys359, and Cys354-Cys355. Ser231 is lipidated: O-palmitoleoyl serine; by mom-1.

The protein belongs to the Wnt family. Post-translationally, palmitoleoylation is required for efficient binding to frizzled receptors. Depalmitoleoylation leads to Wnt signaling pathway inhibition. As to expression, expressed in intestine, some head neurons and ventral nerve cord and pharyngeal neurons. Expressed in the tail and weakly expressed in the vulva and body wall muscles. Expressed highly in posterior dorsal and ventral muscle cells.

Its subcellular location is the secreted. It is found in the extracellular space. The protein localises to the extracellular matrix. The protein resides in the cytoplasm. It localises to the cell membrane. Ligand for members of the frizzled family of seven transmembrane receptors. Probable developmental protein. May be a signaling molecule which affects the development of discrete regions of tissues. Is likely to signal over only few cell diameters. Binds receptor tyrosine kinase cam-1. Together with Wnt ligand cwn-2, regulates the migration of CAN, ALM, BDU and HSN neurons during embryogenesis, the migration of QL and QR neuroblast descendants during larval development, and polarity of ALM neurons. Also acts with the Wnt ligand egl-20 to direct HSN neuron migration. Acts through the Wnt receptor cfz-2 to direct ALM migration. Also plays a role in axon growth and guidance in HSN and male CP neurons. In addition, together with Wnt ligand cwn-2, negatively regulates developmental neurite pruning of AIM neurons probably by acting as a ligand for receptor tyrosine kinase cam-1. Probably by activating the Wnt/Frizzled pathway, may regulate vulva development. May act redundantly with other Wnt ligands such as cwn-2 and mom-2 to control seam cell polarity. This is Protein Wnt-1 (cwn-1) from Caenorhabditis elegans.